The sequence spans 368 residues: tRNA(Met) cytidine acetate ligase (368 aa).

ATP-binding positions include 7-20, G96, N152, and R175; that span reads IAEF…HKYL.

Belongs to the TmcAL family.

The protein localises to the cytoplasm. It catalyses the reaction cytidine(34) in elongator tRNA(Met) + acetate + ATP = N(4)-acetylcytidine(34) in elongator tRNA(Met) + AMP + diphosphate. Functionally, catalyzes the formation of N(4)-acetylcytidine (ac(4)C) at the wobble position of elongator tRNA(Met), using acetate and ATP as substrates. First activates an acetate ion to form acetyladenylate (Ac-AMP) and then transfers the acetyl group to tRNA to form ac(4)C34. The protein is tRNA(Met) cytidine acetate ligase of Streptococcus pyogenes serotype M4 (strain MGAS10750).